The chain runs to 419 residues: Peptide chain release factor subunit 1 (419 aa).

The protein belongs to the eukaryotic release factor 1 family. As to quaternary structure, heterodimer of two subunits, one of which binds GTP.

The protein resides in the cytoplasm. In terms of biological role, directs the termination of nascent peptide synthesis (translation) in response to the termination codons UAA, UAG and UGA. The chain is Peptide chain release factor subunit 1 from Methanococcus vannielii (strain ATCC 35089 / DSM 1224 / JCM 13029 / OCM 148 / SB).